We begin with the raw amino-acid sequence, 174 residues long: uncharacterized protein (174 aa).

Residues 1-31 (MCCVYRMNRPASGLTVVFCGKLSGKPGPKSA) form the signal peptide. A disordered region spans residues 39–59 (KSGADDGGENPRFFSAGPRTE).

This is an uncharacterized protein from Escherichia coli (strain K12).